The following is a 364-amino-acid chain: tRNA-specific 2-thiouridylase MnmA 1 (364 aa).

ATP-binding positions include 11 to 18 (GMSGGTDS) and Phe37. Cys96 functions as the Nucleophile in the catalytic mechanism. A disulfide bond links Cys96 and Cys193. Gly120 is a binding site for ATP. The tract at residues 142–144 (KDQ) is interaction with tRNA. Cys193 (cysteine persulfide intermediate) is an active-site residue. The segment at 309–310 (RY) is interaction with tRNA.

It belongs to the MnmA/TRMU family.

The protein resides in the cytoplasm. The enzyme catalyses S-sulfanyl-L-cysteinyl-[protein] + uridine(34) in tRNA + AH2 + ATP = 2-thiouridine(34) in tRNA + L-cysteinyl-[protein] + A + AMP + diphosphate + H(+). Its function is as follows. Catalyzes the 2-thiolation of uridine at the wobble position (U34) of tRNA, leading to the formation of s(2)U34. In Bacteroides fragilis (strain YCH46), this protein is tRNA-specific 2-thiouridylase MnmA 1.